A 689-amino-acid polypeptide reads, in one-letter code: MQNIDLISEEEAQKLLEELADKIAAYNHAYYIEDNPLVSDSEYDQLFNTNLKLEQKFPHLILENSPSKKVGAKIANKFAKVTHQVPMLSLSNAFDEQDVRDFVDRIKIFLRLNEFAPIFCEPKIDGVSFSAVYKHGVLTTGATRGDGYVGEDITANIKTIKNFPHKIDNVPEFLEVRGEIYIEKQDFLNLNKEQEEQGKDKFANPRNAAAGSLRQLDSSITAKRPLKYFVYSGGVTEQNLASSQDQLLTKLKECGFNINEISKLASSEEEIFAFYEYLKTNRENLPYEIDGVVYKLNDFALQNRMGFIARNPRFATAHKFPAIIGQTKLLSITVQVGRTGTLTPVAELEPIEIGGVTVSRATLHNFQEIARKDLRIKDYVFLQRAGDVIPKIMGVDFDKRPNDTETFDTPLFCLSCNSKLHYTPEDIIIRCDNGLNCPAQNYERIRHFVSKNAMDIEGLGRKQVEFLIDKGLISNPLDIFFLKEKNDSSLAKLENMDGWGKKSVENLFKNIEKSKNVSLPRFIYALGIRHIGEQNAKLLAREFGSYNNFIAQMELLRTNEPDIYQKLNNLEGIGDKILVDIIDFFDVKENIELIKKLGEILNIEDYKETREQSSLTDKIVVFTGSLPTISRAEAKATAEKLGAKVAVGVSSNTDLVVAGVDAGSKLKKAKELNIKIIDEEEWLTLIKNV.

NAD(+)-binding positions include 40–44 (DSEYD), 89–90 (SL), and glutamate 121. The N6-AMP-lysine intermediate role is filled by lysine 123. Positions 144, 179, 295, and 319 each coordinate NAD(+). Positions 413, 416, 431, and 437 each coordinate Zn(2+). In terms of domain architecture, BRCT spans 610–689 (REQSSLTDKI…EEWLTLIKNV (80 aa)).

This sequence belongs to the NAD-dependent DNA ligase family. LigA subfamily. Mg(2+) is required as a cofactor. Requires Mn(2+) as cofactor.

It carries out the reaction NAD(+) + (deoxyribonucleotide)n-3'-hydroxyl + 5'-phospho-(deoxyribonucleotide)m = (deoxyribonucleotide)n+m + AMP + beta-nicotinamide D-nucleotide.. Its function is as follows. DNA ligase that catalyzes the formation of phosphodiester linkages between 5'-phosphoryl and 3'-hydroxyl groups in double-stranded DNA using NAD as a coenzyme and as the energy source for the reaction. It is essential for DNA replication and repair of damaged DNA. The chain is DNA ligase from Rickettsia rickettsii (strain Iowa).